A 64-amino-acid chain; its full sequence is Large ribosomal subunit protein uL29 (64 aa).

It belongs to the universal ribosomal protein uL29 family.

In Cupriavidus necator (strain ATCC 17699 / DSM 428 / KCTC 22496 / NCIMB 10442 / H16 / Stanier 337) (Ralstonia eutropha), this protein is Large ribosomal subunit protein uL29.